The sequence spans 211 residues: ATP phosphoribosyltransferase (211 aa).

The protein belongs to the ATP phosphoribosyltransferase family. Short subfamily. Heteromultimer composed of HisG and HisZ subunits.

It localises to the cytoplasm. The enzyme catalyses 1-(5-phospho-beta-D-ribosyl)-ATP + diphosphate = 5-phospho-alpha-D-ribose 1-diphosphate + ATP. It participates in amino-acid biosynthesis; L-histidine biosynthesis; L-histidine from 5-phospho-alpha-D-ribose 1-diphosphate: step 1/9. Functionally, catalyzes the condensation of ATP and 5-phosphoribose 1-diphosphate to form N'-(5'-phosphoribosyl)-ATP (PR-ATP). Has a crucial role in the pathway because the rate of histidine biosynthesis seems to be controlled primarily by regulation of HisG enzymatic activity. The polypeptide is ATP phosphoribosyltransferase (Bacillus thuringiensis subsp. konkukian (strain 97-27)).